The primary structure comprises 190 residues: dCTP deaminase (190 aa).

DCTP is bound by residues 111 to 116, 135 to 137, Q156, Y172, and Q182; these read KSTYAR and TLE. E137 serves as the catalytic Proton donor/acceptor.

The protein belongs to the dCTP deaminase family. Homotrimer.

The enzyme catalyses dCTP + H2O + H(+) = dUTP + NH4(+). It functions in the pathway pyrimidine metabolism; dUMP biosynthesis; dUMP from dCTP (dUTP route): step 1/2. Catalyzes the deamination of dCTP to dUTP. The polypeptide is dCTP deaminase (Stenotrophomonas maltophilia (strain K279a)).